Consider the following 176-residue polypeptide: Inner membrane-spanning protein YciB (176 aa).

5 helical membrane-spanning segments follow: residues 23-43 (MIAA…FLYW), 50-70 (TMQW…IVLG), 74-94 (FIMW…WGSH), 119-139 (LTYM…FVFT), and 150-170 (MFGS…YLST).

Belongs to the YciB family.

Its subcellular location is the cell inner membrane. In terms of biological role, plays a role in cell envelope biogenesis, maintenance of cell envelope integrity and membrane homeostasis. This is Inner membrane-spanning protein YciB from Neisseria meningitidis serogroup A / serotype 4A (strain DSM 15465 / Z2491).